The following is a 424-amino-acid chain: MKFDVIIIGGGLAGLACGIRLAEQGKYCAIVSSGQNALHFSSGSLDLLAKLPDGQAVSQPLSALSALAELAPEHPYSKMRNITQLDELVQEAEALLRRCGLDIVGSSAENHLRLTPLGSCRPTWLSLADIPVAPLNGPLPWQRVAVIGIEGFLDFQPQMVASALQDQGIDATADYLHLPALDRLRDNPSEFRAVNIARILDLPENRQPLADELSRLSSTAEMILLPACIGLDKSAPLDALRAVVGKPIQLLPTLPPSLLGMRLHQALRHRFQQLGGLVMPGDAVLRAELVDNRITGLYSRNHGDIPLRAAQMVLASGSFFSNGLVATFDKIYEPILDLDILSLPHRADWSHSNLFAPQPYLQFGVNTDNHLRPLRGGVALENLHAIGAVLGGYDPLQQGCGAGVSLTSAVFVAEQIISEMAVTL.

The protein belongs to the anaerobic G-3-P dehydrogenase subunit B family. In terms of assembly, composed of a catalytic GlpA/B dimer and of membrane bound GlpC. FMN serves as cofactor.

The catalysed reaction is a quinone + sn-glycerol 3-phosphate = dihydroxyacetone phosphate + a quinol. Its pathway is polyol metabolism; glycerol degradation via glycerol kinase pathway; glycerone phosphate from sn-glycerol 3-phosphate (anaerobic route): step 1/1. Its function is as follows. Conversion of glycerol 3-phosphate to dihydroxyacetone. Uses fumarate or nitrate as electron acceptor. This chain is Anaerobic glycerol-3-phosphate dehydrogenase subunit B, found in Yersinia pestis bv. Antiqua (strain Antiqua).